Reading from the N-terminus, the 69-residue chain is uncharacterized protein (69 aa).

Disordered stretches follow at residues 1-32 (MSAPYKNLDRDTKHTHPKLNETERNLNRGWGD) and 44-69 (QSDADKQLAEDKMETKYEKSKPAPSD). Basic and acidic residues-rich tracts occupy residues 7-32 (NLDRDTKHTHPKLNETERNLNRGWGD) and 46-69 (DADKQLAEDKMETKYEKSKPAPSD).

This is an uncharacterized protein from Schizosaccharomyces pombe (strain 972 / ATCC 24843) (Fission yeast).